The chain runs to 399 residues: Na(+)/H(+) antiporter NhaA (399 aa).

The next 11 membrane-spanning stretches (helical) occupy residues 12–32, 60–80, 94–114, 126–146, 155–175, 178–198, 206–226, 263–283, 284–304, 336–356, and 372–392; these read LDIA…IAAN, LLLW…GLEI, LAAL…LIYA, GWAI…TLLG, IFLT…IAFF, ASLS…LIGL, LWPY…SGVH, PWVT…VSLA, GLPP…GLFL, GVAL…TLAF, and LGVL…LRLS.

This sequence belongs to the NhaA Na(+)/H(+) (TC 2.A.33) antiporter family.

It localises to the cell inner membrane. The catalysed reaction is Na(+)(in) + 2 H(+)(out) = Na(+)(out) + 2 H(+)(in). In terms of biological role, na(+)/H(+) antiporter that extrudes sodium in exchange for external protons. The sequence is that of Na(+)/H(+) antiporter NhaA from Rhodospirillum rubrum (strain ATCC 11170 / ATH 1.1.1 / DSM 467 / LMG 4362 / NCIMB 8255 / S1).